Consider the following 1295-residue polypeptide: Phosphoribosylformylglycinamidine synthase (1295 aa).

Positions 305–327 are disordered; the sequence is WPGAATGSGGEIRDEGATGRGAK. ATP is bound by residues 307 to 318 and A678; that span reads GAATGSGGEIRD. Residues E718, N722, and D884 each coordinate Mg(2+). S886 contacts ATP. One can recognise a Glutamine amidotransferase type-1 domain in the interval 1042–1295; the sequence is VAVLREQGVN…IFRNARKQLG (254 aa). C1135 (nucleophile) is an active-site residue. Catalysis depends on residues H1260 and E1262.

The protein in the N-terminal section; belongs to the FGAMS family. As to quaternary structure, monomer. Both N-terminus methionine truncation and retention have been observed for this protein.

The protein resides in the cytoplasm. The catalysed reaction is N(2)-formyl-N(1)-(5-phospho-beta-D-ribosyl)glycinamide + L-glutamine + ATP + H2O = 2-formamido-N(1)-(5-O-phospho-beta-D-ribosyl)acetamidine + L-glutamate + ADP + phosphate + H(+). Its pathway is purine metabolism; IMP biosynthesis via de novo pathway; 5-amino-1-(5-phospho-D-ribosyl)imidazole from N(2)-formyl-N(1)-(5-phospho-D-ribosyl)glycinamide: step 1/2. Phosphoribosylformylglycinamidine synthase involved in the purines biosynthetic pathway. Catalyzes the ATP-dependent conversion of formylglycinamide ribonucleotide (FGAR) and glutamine to yield formylglycinamidine ribonucleotide (FGAM) and glutamate. The protein is Phosphoribosylformylglycinamidine synthase of Escherichia coli (strain K12).